Here is a 351-residue protein sequence, read N- to C-terminus: Dihydroorotate dehydrogenase (quinone) (351 aa).

FMN is bound by residues 67–71 (AGFDK) and T91. Residue K71 coordinates substrate. 116 to 120 (NAMGF) is a substrate binding site. Residues N145 and N178 each coordinate FMN. Position 178 (N178) interacts with substrate. S181 acts as the Nucleophile in catalysis. Residue N183 coordinates substrate. Residues K214 and T242 each contribute to the FMN site. Residue 243–244 (NT) coordinates substrate. FMN is bound by residues G262, G291, and 312 to 313 (YS).

The protein belongs to the dihydroorotate dehydrogenase family. Type 2 subfamily. As to quaternary structure, monomer. Requires FMN as cofactor.

It is found in the cell membrane. It catalyses the reaction (S)-dihydroorotate + a quinone = orotate + a quinol. The protein operates within pyrimidine metabolism; UMP biosynthesis via de novo pathway; orotate from (S)-dihydroorotate (quinone route): step 1/1. In terms of biological role, catalyzes the conversion of dihydroorotate to orotate with quinone as electron acceptor. This is Dihydroorotate dehydrogenase (quinone) (pyrD) from Helicobacter pylori (strain J99 / ATCC 700824) (Campylobacter pylori J99).